The primary structure comprises 288 residues: Ribosomal RNA small subunit methyltransferase A (288 aa).

S-adenosyl-L-methionine-binding residues include asparagine 18, leucine 20, glycine 45, glutamate 66, aspartate 91, and asparagine 118.

The protein belongs to the class I-like SAM-binding methyltransferase superfamily. rRNA adenine N(6)-methyltransferase family. RsmA subfamily.

It is found in the cytoplasm. The catalysed reaction is adenosine(1518)/adenosine(1519) in 16S rRNA + 4 S-adenosyl-L-methionine = N(6)-dimethyladenosine(1518)/N(6)-dimethyladenosine(1519) in 16S rRNA + 4 S-adenosyl-L-homocysteine + 4 H(+). Its function is as follows. Specifically dimethylates two adjacent adenosines (A1518 and A1519) in the loop of a conserved hairpin near the 3'-end of 16S rRNA in the 30S particle. May play a critical role in biogenesis of 30S subunits. In Pasteurella multocida (strain Pm70), this protein is Ribosomal RNA small subunit methyltransferase A.